The chain runs to 198 residues: Heme oxygenase PigA (198 aa).

H26 contributes to the heme b binding site.

This sequence belongs to the heme oxygenase family.

The enzyme catalyses heme b + 3 AH2 + 3 O2 + 2 H(+) = biliverdin IXbeta + CO + Fe(2+) + 3 A + 3 H2O. It catalyses the reaction heme b + 3 AH2 + 3 O2 + 3 H(+) = biliverdin IXdelta + CO + Fe(2+) + 3 A + 3 H2O. Functionally, involved in heme degradation. Catalyzes the degradation of heme to biliverdin, with the release of iron. Forms biliverdin delta (70%) and beta (30%). Under anaerobic conditions ferredoxin--NADP(+) reductase (fpr) can provide the necessary electrons; Bfd is not required. The sequence is that of Heme oxygenase PigA from Pseudomonas aeruginosa (strain ATCC 15692 / DSM 22644 / CIP 104116 / JCM 14847 / LMG 12228 / 1C / PRS 101 / PAO1).